Here is a 343-residue protein sequence, read N- to C-terminus: MKQVLLKAWRARGWLARLLWPVAQLHGLLVRLRRALYRRGMLSSERFKVPVIVVGNVVAGGAGKTPLVMALVKHFQAQGLRVGVVSRGYGRSGHESLEVRPGTPVDESGDEPALIQHATGAPVFVAQRRTQALRDLLAAYPATAVVVCDDGLQHYALQRDIEIAVFDDRGVGNGWLLPAGPLREPWPERLRQGVDLVLHTGQQPAFEGYTSRRQLADHAVAADGSSLALTALAHQPVVALAGIASPEAFFDMLRARGLTLQKTLALPDHHDFKTGDLNALAGRTVLCTEKDAVKLFALPDHSKIKLLAVPLEFSPEPAFFTALDGLLTPLLSQLPSSHGHQTT.

58 to 65 (VAGGAGKT) lines the ATP pocket.

The protein belongs to the LpxK family.

The enzyme catalyses a lipid A disaccharide + ATP = a lipid IVA + ADP + H(+). It functions in the pathway glycolipid biosynthesis; lipid IV(A) biosynthesis; lipid IV(A) from (3R)-3-hydroxytetradecanoyl-[acyl-carrier-protein] and UDP-N-acetyl-alpha-D-glucosamine: step 6/6. Transfers the gamma-phosphate of ATP to the 4'-position of a tetraacyldisaccharide 1-phosphate intermediate (termed DS-1-P) to form tetraacyldisaccharide 1,4'-bis-phosphate (lipid IVA). This is Tetraacyldisaccharide 4'-kinase from Polaromonas naphthalenivorans (strain CJ2).